We begin with the raw amino-acid sequence, 437 residues long: Keratin, type I cytoskeletal 13 (437 aa).

The interval 1–95 (MSCRFQSSSM…GVDGGLLSGN (95 aa)) is head. Residues R27 and R35 each carry the omega-N-methylarginine modification. Residues 96-131 (EKITMQNLNDRLASYLDKVRALEAANADLEVKIRDW) form a coil 1A region. The 313-residue stretch at 96 to 408 (EKITMQNLND…SLLEGQDAKM (313 aa)) folds into the IF rod domain. Residues 132–150 (HLKQSPASPERDYSAYYKT) are linker 1. The tract at residues 151–242 (IEELRIKILE…KNHEEEMKEF (92 aa)) is coil 1B. Positions 243–265 (SNQVVGQVNVEMDATPGIDLTRV) are linker 12. The segment at 266-404 (LAEMREQYEA…ATYRSLLEGQ (139 aa)) is coil 2. The segment at 405-437 (DAKMTGFNSGGNNTTTSNGSPSSNSGRPDFRKY) is tail. A disordered region spans residues 408 to 437 (MTGFNSGGNNTTTSNGSPSSNSGRPDFRKY). A compositionally biased stretch (low complexity) spans 409 to 430 (TGFNSGGNNTTTSNGSPSSNSG).

Belongs to the intermediate filament family. As to quaternary structure, heterotetramer of two type I and two type II keratins. Post-translationally, O-glycosylated; glycans consist of single N-acetylglucosamine residues. As to expression, expressed in tongue epithelia (at protein level). Expressed in upper suprabasal layers of the corneal epithelium (at protein level).

Type 1 keratin. Maintains postnatal tongue mucosal cell homeostasis and tissue organization in response to mechanical stress, potentially via regulation of the G1/S phase cyclins CCNE1 and CCNE2. This Mus musculus (Mouse) protein is Keratin, type I cytoskeletal 13 (Krt13).